The chain runs to 146 residues: MKLHELQPAPGSRKKAVRVGRGIGSGNGKTSGRGQKGQNARSGGGVRLGFEGGQTPLFRRLPKRGFTNINRKEYAVVNLEKLNRFEDGTEVTPELLLETGVISKLKSGVKILGKGQIEKKLTVKAHKFSASAKEAIEAAGGKTEVI.

The interval 1 to 51 (MKLHELQPAPGSRKKAVRVGRGIGSGNGKTSGRGQKGQNARSGGGVRLGFE) is disordered. Composition is skewed to gly residues over residues 21-35 (RGIGSGNGKTSGRGQ) and 42-51 (SGGGVRLGFE).

The protein belongs to the universal ribosomal protein uL15 family. In terms of assembly, part of the 50S ribosomal subunit.

Functionally, binds to the 23S rRNA. In Geobacillus kaustophilus (strain HTA426), this protein is Large ribosomal subunit protein uL15.